Reading from the N-terminus, the 187-residue chain is Casparian strip membrane protein 5 (187 aa).

Residues 1–24 (MKSGQAEIVETSKGIQKSGLMSRR) are Cytoplasmic-facing. Residues 25–45 (IAILEFILRIVAFFNTIGSAI) traverse the membrane as a helical segment. The Extracellular portion of the chain corresponds to 46–74 (LMGTTHETLPFFTQFIRFQAEYNDLPALT). The helical transmembrane segment at 75 to 95 (FFVVANAVVSGYLIMSLTLAF) threads the bilayer. The Cytoplasmic segment spans residues 96–107 (VHIVKRKTQNTR). The chain crosses the membrane as a helical span at residues 108 to 128 (ILLIVLDVAMLGLLSAGASSA). Residues 129-161 (AAIVYLAHNGNNKTNWFAICQQFNSFCERISGS) lie on the Extracellular side of the membrane. N-linked (GlcNAc...) asparagine glycosylation is present at asparagine 140. Residues 162 to 182 (LIGSFIAVVLLILLILLSAIA) traverse the membrane as a helical segment. Over 183-187 (LSRRH) the chain is Cytoplasmic.

The protein belongs to the Casparian strip membrane proteins (CASP) family. In terms of assembly, homodimer and heterodimers.

It localises to the cell membrane. Functionally, regulates membrane-cell wall junctions and localized cell wall deposition. Required for establishment of the Casparian strip membrane domain (CSD) and the subsequent formation of Casparian strips, a cell wall modification of the root endodermis that determines an apoplastic barrier between the intraorganismal apoplasm and the extraorganismal apoplasm and prevents lateral diffusion. This Arabidopsis lyrata subsp. lyrata (Lyre-leaved rock-cress) protein is Casparian strip membrane protein 5.